The sequence spans 159 residues: 2-C-methyl-D-erythritol 2,4-cyclodiphosphate synthase (159 aa).

A divalent metal cation is bound by residues Asp-8 and His-10. 4-CDP-2-C-methyl-D-erythritol 2-phosphate contacts are provided by residues 8–10 (DVH) and 34–35 (HS). Position 42 (His-42) interacts with a divalent metal cation. 4-CDP-2-C-methyl-D-erythritol 2-phosphate contacts are provided by residues 56-58 (DIG), 132-135 (TTTE), and Arg-142.

The protein belongs to the IspF family. As to quaternary structure, homotrimer. It depends on a divalent metal cation as a cofactor.

The catalysed reaction is 4-CDP-2-C-methyl-D-erythritol 2-phosphate = 2-C-methyl-D-erythritol 2,4-cyclic diphosphate + CMP. Its pathway is isoprenoid biosynthesis; isopentenyl diphosphate biosynthesis via DXP pathway; isopentenyl diphosphate from 1-deoxy-D-xylulose 5-phosphate: step 4/6. In terms of biological role, involved in the biosynthesis of isopentenyl diphosphate (IPP) and dimethylallyl diphosphate (DMAPP), two major building blocks of isoprenoid compounds. Catalyzes the conversion of 4-diphosphocytidyl-2-C-methyl-D-erythritol 2-phosphate (CDP-ME2P) to 2-C-methyl-D-erythritol 2,4-cyclodiphosphate (ME-CPP) with a corresponding release of cytidine 5-monophosphate (CMP). This chain is 2-C-methyl-D-erythritol 2,4-cyclodiphosphate synthase, found in Chlorobium phaeobacteroides (strain BS1).